The sequence spans 196 residues: Imidazoleglycerol-phosphate dehydratase (196 aa).

Belongs to the imidazoleglycerol-phosphate dehydratase family.

Its subcellular location is the cytoplasm. The enzyme catalyses D-erythro-1-(imidazol-4-yl)glycerol 3-phosphate = 3-(imidazol-4-yl)-2-oxopropyl phosphate + H2O. The protein operates within amino-acid biosynthesis; L-histidine biosynthesis; L-histidine from 5-phospho-alpha-D-ribose 1-diphosphate: step 6/9. The protein is Imidazoleglycerol-phosphate dehydratase of Clostridium botulinum (strain ATCC 19397 / Type A).